Here is a 110-residue protein sequence, read N- to C-terminus: Nucleoid-associated protein KPN78578_04440 (110 aa).

Belongs to the YbaB/EbfC family. As to quaternary structure, homodimer.

The protein resides in the cytoplasm. It is found in the nucleoid. Functionally, binds to DNA and alters its conformation. May be involved in regulation of gene expression, nucleoid organization and DNA protection. The polypeptide is Nucleoid-associated protein KPN78578_04440 (Klebsiella pneumoniae subsp. pneumoniae (strain ATCC 700721 / MGH 78578)).